A 1391-amino-acid chain; its full sequence is Eukaryotic translation initiation factor 3 subunit A (1391 aa).

The PCI domain maps to 315-498 (MQRMSTRVLL…RTLSFGSDLN (184 aa)). 6 stretches are compositionally biased toward basic and acidic residues: residues 809 to 921 (DKEE…RGGP), 940 to 959 (AALR…EKVS), 966 to 1234 (EKGG…RDQT), 1246 to 1257 (GWREREKAREDS), 1265 to 1307 (QAPE…ETPR), and 1313 to 1380 (DSDR…IKPE). Residues 809-1391 (DKEEEEERLR…DEDGWTTVRR (583 aa)) form a disordered region. Tandem repeats lie at residues 973 to 982 (DEDRGPKRGL) and 983 to 992 (EEDRGPRRGI). The segment at 973–1229 (DEDRGPKRGL…DDDRGPRRGE (257 aa)) is 26 X 10 AA approximate tandem repeats of [DE]-[DE]-[DE]-R-[GATV]-[PS]-[KRW]-R-G-[AEFGIL]. Residues 993 to 1001 (DDAGPRRGF) form a 3; approximate repeat. Repeat copies occupy residues 1002-1011 (EEDRGPRRGI), 1012-1021 (EDDRAPRRGF), 1022-1031 (DDDRGPRRGF), 1032-1041 (DDDRGPRRGF), 1042-1051 (DEDRGPRRGI), 1052-1061 (DDDRGPRRGF), 1062-1071 (DEDRTPRRGF), 1072-1081 (DDDRGPRRGF), 1082-1091 (DDDRGPRRGF), 1092-1101 (DEDRGPRRGF), 1102-1111 (EDDRGPRRGF), 1112-1120 (EDDRGPRRG), 1122-1131 (EDDRGPRRGF), 1132-1141 (EDDRGPRRGF), 1142-1151 (EDDRGPRRGF), 1152-1161 (DEDRGPRRGF), 1162-1171 (EDDRGPRRGF), 1172-1181 (DEDRTPRRGF), 1182-1191 (DDDRGPRRGL), and 1192-1201 (DEDRGSWRGG). Residues 1202-1209 (DDVPRRGA) form a 24; approximate repeat. A run of 2 repeats spans residues 1210–1219 (DDDRGPRRGA) and 1220–1229 (DDDRGPRRGE).

It belongs to the eIF-3 subunit A family. As to quaternary structure, component of the eukaryotic translation initiation factor 3 (eIF-3) complex, which is composed of 13 subunits: eif3a, eif3b, eif3c, eif3d, eif3e, eif3f, eif3g, eif3h, eif3i, eif3j, eif3k, eif3l and eif3m.

The protein resides in the cytoplasm. In terms of biological role, RNA-binding component of the eukaryotic translation initiation factor 3 (eIF-3) complex, which is involved in protein synthesis of a specialized repertoire of mRNAs and, together with other initiation factors, stimulates binding of mRNA and methionyl-tRNAi to the 40S ribosome. The eIF-3 complex specifically targets and initiates translation of a subset of mRNAs involved in cell proliferation. This Xenopus tropicalis (Western clawed frog) protein is Eukaryotic translation initiation factor 3 subunit A (eif3a).